Reading from the N-terminus, the 375-residue chain is Probable protein-glutamate methylesterase BB_0415 (375 aa).

The 115-residue stretch at 6–120 folds into the Response regulatory domain; that stretch reads SVLIIEYFAV…SHEIKKEQII (115 aa). Positions 183-375 constitute a CheB-type methylesterase domain; the sequence is KLRKFDIIAI…KLLKAILINS (193 aa). Catalysis depends on residues S195, H221, and D317.

The catalysed reaction is [protein]-L-glutamate 5-O-methyl ester + H2O = L-glutamyl-[protein] + methanol + H(+). The chain is Probable protein-glutamate methylesterase BB_0415 from Borreliella burgdorferi (strain ATCC 35210 / DSM 4680 / CIP 102532 / B31) (Borrelia burgdorferi).